We begin with the raw amino-acid sequence, 161 residues long: MPSFDTVCEANFVEVKNAVENTAKEIGTRFDFKGTSAAVELKDKEITLFGDADFQLQQVEDILRNKLTKRNVDVRFLDVQKPQKIGGDKLKQVVKVKNGIDSEQAKKIQRLIKDSKLKLQAAIQEDKVRVTGAKRDDLQAAMALIRKDIADLPLTFDNFRD.

Belongs to the YajQ family.

In terms of biological role, nucleotide-binding protein. This chain is Nucleotide-binding protein Dtpsy_2240, found in Acidovorax ebreus (strain TPSY) (Diaphorobacter sp. (strain TPSY)).